The chain runs to 421 residues: MVADVLLTHFNQLFCLNDPGHPLTGQEMKKATIVEDGYIAIKDGLIVALGSGEPDAELVGPQTIMRSYKGKIATPGIIDCHTHLVYGGSREHEFAKKLAGVSYLDILAQGGGILSTVRATRSASFDNLYQKSKRLLDYMLLHGVTTVEAKSGYGLDWETEKRQLDVVAALEKDHPIDLVSTFMAAHAIPEEYKGNPKAYLDVIIKDMLPVVKEENLAEFCDIFCEKNVFTADESRYLLSKAKEMGFKLRIHADEIASIGGVDVAAELSAVSAEHLMMITDDGIAKLIGAGVIGNLLPATTFSLMEDTYAPARKMIDAGMAITLSTDSNPGSCPTANMQFVMQLGCFMLRLTPIEVLNAVTINAAYSVNRQERVGSLTVGKEADIAIFDAPNIDYPFYFFATNLIHQVYKKGQLTVDRGRIL.

Positions 81 and 83 each coordinate Fe(3+). 2 residues coordinate Zn(2+): His-81 and His-83. 3 residues coordinate 4-imidazolone-5-propanoate: Arg-90, Tyr-153, and His-186. Residue Tyr-153 coordinates N-formimidoyl-L-glutamate. His-251 lines the Fe(3+) pocket. His-251 provides a ligand contact to Zn(2+). Position 254 (Glu-254) interacts with 4-imidazolone-5-propanoate. Asp-326 contributes to the Fe(3+) binding site. Asp-326 contributes to the Zn(2+) binding site. 2 residues coordinate N-formimidoyl-L-glutamate: Asn-328 and Gly-330. Ser-331 serves as a coordination point for 4-imidazolone-5-propanoate.

It belongs to the metallo-dependent hydrolases superfamily. HutI family. Zn(2+) is required as a cofactor. Requires Fe(3+) as cofactor.

It is found in the cytoplasm. It carries out the reaction 4-imidazolone-5-propanoate + H2O = N-formimidoyl-L-glutamate. It functions in the pathway amino-acid degradation; L-histidine degradation into L-glutamate; N-formimidoyl-L-glutamate from L-histidine: step 3/3. Catalyzes the hydrolytic cleavage of the carbon-nitrogen bond in imidazolone-5-propanoate to yield N-formimidoyl-L-glutamate. It is the third step in the universal histidine degradation pathway. This chain is Imidazolonepropionase, found in Streptococcus pyogenes serotype M28 (strain MGAS6180).